A 112-amino-acid polypeptide reads, in one-letter code: Divalent-cation tolerance protein CutA (112 aa).

The Cu cation site is built by Cys16, His83, and His84.

Belongs to the CutA family. Homotrimer. Cu cation serves as cofactor.

Its subcellular location is the cytoplasm. Its function is as follows. Involved in resistance toward heavy metals. In Shigella flexneri, this protein is Divalent-cation tolerance protein CutA.